A 127-amino-acid chain; its full sequence is Transthyretin (127 aa).

C10 carries the sulfocysteine modification. L-thyroxine is bound at residue K15. E42 is subject to 4-carboxyglutamate. E54 contributes to the L-thyroxine binding site. N98 is a glycosylation site (N-linked (GlcNAc...) asparagine). Position 117 (S117) interacts with L-thyroxine.

Belongs to the transthyretin family. Homotetramer. Dimer of dimers. In the homotetramer, subunits assemble around a central channel that can accommodate two ligand molecules. Interacts with RBP4. Sulfonation of the reactive cysteine Cys-10 enhances the stability of the native conformation of TTR, avoiding misassembly of the protein leading to amyloid formation. As to expression, detected in serum (at protein level).

It is found in the secreted. Thyroid hormone-binding protein. Probably transports thyroxine from the bloodstream to the brain. The polypeptide is Transthyretin (TTR) (Oryctolagus cuniculus (Rabbit)).